Here is a 287-residue protein sequence, read N- to C-terminus: Diphthine methyl ester synthase (287 aa).

S-adenosyl-L-methionine contacts are provided by residues Leu9, Asp84, Gly87, 112 to 113 (SI), Val163, Val221, and His248.

The protein belongs to the diphthine synthase family.

The protein localises to the cytoplasm. The catalysed reaction is 2-[(3S)-amino-3-carboxypropyl]-L-histidyl-[translation elongation factor 2] + 4 S-adenosyl-L-methionine = diphthine methyl ester-[translation elongation factor 2] + 4 S-adenosyl-L-homocysteine + 3 H(+). It functions in the pathway protein modification; peptidyl-diphthamide biosynthesis. In terms of biological role, S-adenosyl-L-methionine-dependent methyltransferase that catalyzes four methylations of the modified target histidine residue in translation elongation factor 2 (EF-2), to form an intermediate called diphthine methyl ester. The four successive methylation reactions represent the second step of diphthamide biosynthesis. This chain is Diphthine methyl ester synthase (DPH5), found in Gibberella zeae (strain ATCC MYA-4620 / CBS 123657 / FGSC 9075 / NRRL 31084 / PH-1) (Wheat head blight fungus).